A 555-amino-acid polypeptide reads, in one-letter code: Bifunctional epoxide hydrolase 2 (555 aa).

The interval 1–224 (MALRAAVFDL…KVTGVQLLQT (224 aa)) is phosphatase. Residues Asp-9 and Asp-11 each contribute to the Mg(2+) site. Lys-43 carries the post-translational modification N6-acetyllysine. 123–124 (TN) contacts phosphate. Mg(2+) is bound at residue Asp-185. N6-acetyllysine is present on residues Lys-191 and Lys-215. Residues 235-555 (SALSHGYVLI…ARNPLVDSKL (321 aa)) are epoxide hydrolase. An AB hydrolase-1 domain is found at 259–531 (PAVCLCHGFP…CGHWTQIDKP (273 aa)). Asp-335 serves as the catalytic Nucleophile. Ser-370 carries the phosphoserine modification. Tyr-383 contacts substrate. An N6-succinyllysine modification is found at Lys-455. Tyr-466 (proton donor) is an active-site residue. Lys-505 carries the post-translational modification N6-succinyllysine. A lipid anchor (S-(15-deoxy-Delta12,14-prostaglandin J2-9-yl)cysteine) is attached at Cys-522. Catalysis depends on His-524, which acts as the Proton acceptor. The Microbody targeting signal motif lies at 553–555 (SKL). Lys-554 carries the post-translational modification N6-succinyllysine.

The protein belongs to the AB hydrolase superfamily. Epoxide hydrolase family. As to quaternary structure, homodimer. Mg(2+) serves as cofactor. In terms of processing, the covalent modification of cysteine by 15-deoxy-Delta12,14-prostaglandin-J2 is autocatalytic and reversible. It may occur as an alternative to other cysteine modifications, such as S-nitrosylation and S-palmitoylation.

The protein resides in the cytoplasm. Its subcellular location is the peroxisome. It carries out the reaction an epoxide + H2O = an ethanediol. The catalysed reaction is (9S,10S)-10-hydroxy-9-(phosphooxy)octadecanoate + H2O = (9S,10S)-9,10-dihydroxyoctadecanoate + phosphate. It catalyses the reaction (14R,15S)-epoxy-(5Z,8Z,11Z)-eicosatrienoate + H2O = (14R,15R)-dihydroxy-(5Z,8Z,11Z)-eicosatrienoate. Inhibited by 1-(1-acetylpiperidin-4-yl)-3-(4-(trifl uoromethoxy)phenyl)urea (TPAU), 1-cyclohexyl-3-dodecylurea (CDU), 12-(3-adamantan-1-yl-ureido)-dodecanoic acid (AUDA), 1-((3S, 5S, 7S)-adamantan-1-yl)-3-(5-(2-(2-ethoxyethoxy) ethoxy)pentyl)urea (AEPU), N-adamantyl-N[']-cyclohexyl urea (ACU), 4-(((1S, 4S)-4-(3-((3S, 5S, 7S)-adamantan-1-yl) ureido)cyclohexyl)oxy)benzoic acid (c-AUCB), 4-(((1R, 4R)-4-(3-((3S, 5S, 7S)-adamantan-1-yl)ureido)cyclohexyl)oxy)benzoic acid (t-AUCB), 4-(((1R, 4R)-4-(3-(4(trifluoromethoxy)phenyl)ureido)cyclohexyl)oxy)benzoic acid (t-TAUCB) and to a lesser extent by 8-(3-((3S, 5S, 7S)-adamantan-1-yl)ureido) octanoic acid (AUOA). Functionally, bifunctional enzyme. The C-terminal domain has epoxide hydrolase activity and acts on epoxides (alkene oxides, oxiranes) and arene oxides. Plays a role in xenobiotic metabolism by degrading potentially toxic epoxides. Also determines steady-state levels of physiological mediators. The N-terminal domain has lipid phosphatase activity, with the highest activity towards threo-9,10-phosphonooxy-hydroxy-octadecanoic acid, followed by erythro-9,10-phosphonooxy-hydroxy-octadecanoic acid, 12-phosphonooxy-octadec-9Z-enoic acid and 12-phosphonooxy-octadec-9E-enoic acid. The polypeptide is Bifunctional epoxide hydrolase 2 (EPHX2) (Sus scrofa (Pig)).